The primary structure comprises 380 residues: Anhydro-N-acetylmuramic acid kinase (380 aa).

Residue 17–24 participates in ATP binding; it reads GTSMDGAD.

Belongs to the anhydro-N-acetylmuramic acid kinase family.

It carries out the reaction 1,6-anhydro-N-acetyl-beta-muramate + ATP + H2O = N-acetyl-D-muramate 6-phosphate + ADP + H(+). Its pathway is amino-sugar metabolism; 1,6-anhydro-N-acetylmuramate degradation. The protein operates within cell wall biogenesis; peptidoglycan recycling. Its function is as follows. Catalyzes the specific phosphorylation of 1,6-anhydro-N-acetylmuramic acid (anhMurNAc) with the simultaneous cleavage of the 1,6-anhydro ring, generating MurNAc-6-P. Is required for the utilization of anhMurNAc either imported from the medium or derived from its own cell wall murein, and thus plays a role in cell wall recycling. In Cupriavidus metallidurans (strain ATCC 43123 / DSM 2839 / NBRC 102507 / CH34) (Ralstonia metallidurans), this protein is Anhydro-N-acetylmuramic acid kinase.